A 403-amino-acid chain; its full sequence is MKPGAPPIATPLLDTLQRGLAELDAQGLRRVRRTADTACDAHMRVDGRDIVGFASNDYLGLAAHPALVAAFAEGAQRYGSGSGGSHLLGGHSRAHARLEDELAGFAGGFSDAPRALYFSTGYMANLAAMTALTGKQATIFSDALNHASLIDGIRLSRANVQIYPHADMHALGALLDASDAPTKLIVSDTVFSMDGDLAPLAELVALAERHGAWLVVDDAHGFGVLGPQGRGALAAAALRSPNLVYVGTLGKAAGVAGAFVVAHETAIEWMIQRARSYIFTTAAPPAVAHAVSASLKVIGGDEGDARRAHLAALIERTRALLRATRWQPVDSHTAVQPLVIGSNDATLAAMRALDARGLWVPAIRPPTVPAGTSRLRISLSAAHSFDDLARLEAALIAASEASA.

Substrate is bound at residue Arg-30. 121-122 (GY) contributes to the pyridoxal 5'-phosphate binding site. A substrate-binding site is contributed by His-146. Ser-192, His-220, and Thr-248 together coordinate pyridoxal 5'-phosphate. The residue at position 251 (Lys-251) is an N6-(pyridoxal phosphate)lysine. Thr-367 provides a ligand contact to substrate.

It belongs to the class-II pyridoxal-phosphate-dependent aminotransferase family. BioF subfamily. Homodimer. Pyridoxal 5'-phosphate is required as a cofactor.

It carries out the reaction 6-carboxyhexanoyl-[ACP] + L-alanine + H(+) = (8S)-8-amino-7-oxononanoate + holo-[ACP] + CO2. The protein operates within cofactor biosynthesis; biotin biosynthesis. Catalyzes the decarboxylative condensation of pimeloyl-[acyl-carrier protein] and L-alanine to produce 8-amino-7-oxononanoate (AON), [acyl-carrier protein], and carbon dioxide. In Burkholderia vietnamiensis (strain G4 / LMG 22486) (Burkholderia cepacia (strain R1808)), this protein is 8-amino-7-oxononanoate synthase.